The sequence spans 302 residues: Oxygen-dependent coproporphyrinogen-III oxidase (302 aa).

Residue Ser-94 coordinates substrate. Residues His-98 and His-108 each coordinate a divalent metal cation. The active-site Proton donor is His-108. Substrate is bound at residue 110–112; sequence NVR. A divalent metal cation-binding residues include His-147 and His-177. The tract at residues 242 to 277 is important for dimerization; that stretch reads YVEFNLVWDRGTLFGLQSGGRTESILMSMPPLARWE. 260–262 lines the substrate pocket; the sequence is GGR.

This sequence belongs to the aerobic coproporphyrinogen-III oxidase family. Homodimer. It depends on a divalent metal cation as a cofactor.

It localises to the cytoplasm. The enzyme catalyses coproporphyrinogen III + O2 + 2 H(+) = protoporphyrinogen IX + 2 CO2 + 2 H2O. It participates in porphyrin-containing compound metabolism; protoporphyrin-IX biosynthesis; protoporphyrinogen-IX from coproporphyrinogen-III (O2 route): step 1/1. In terms of biological role, involved in the heme biosynthesis. Catalyzes the aerobic oxidative decarboxylation of propionate groups of rings A and B of coproporphyrinogen-III to yield the vinyl groups in protoporphyrinogen-IX. In Photorhabdus laumondii subsp. laumondii (strain DSM 15139 / CIP 105565 / TT01) (Photorhabdus luminescens subsp. laumondii), this protein is Oxygen-dependent coproporphyrinogen-III oxidase.